Consider the following 266-residue polypeptide: CAAX prenyl protease 2 (266 aa).

Transmembrane regions (helical) follow at residues methionine 1–phenylalanine 21, leucine 42–tyrosine 59, and isoleucine 78–isoleucine 98. Catalysis depends on proton donor/acceptor residues glutamate 131 and histidine 164. Transmembrane regions (helical) follow at residues glycine 186 to threonine 206, isoleucine 210 to isoleucine 230, and arginine 239 to threonine 259.

It belongs to the peptidase U48 family.

It is found in the endoplasmic reticulum membrane. It localises to the membrane. The enzyme catalyses Hydrolyzes the peptide bond -P2-(S-farnesyl or geranylgeranyl)C-P1'-P2'-P3'-COOH where P1' and P2' are amino acids with aliphatic sidechains and P3' is any C-terminal residue.. In terms of biological role, protease involved in the processing of a variety of prenylated proteins containing the C-terminal CAAX motif, where C is a cysteine modified with an isoprenoid lipid, A is an aliphatic amino acid and X is any C-terminal amino acid. Proteolytically removes the C-terminal three residues of farnesylated and geranylated proteins, leaving the prenylated cysteine as the new C-terminus. This chain is CAAX prenyl protease 2, found in Caenorhabditis elegans.